Consider the following 50-residue polypeptide: Photosystem II reaction center protein K (50 aa).

A propeptide spanning residues 1–13 is cleaved from the precursor; it reads MLNLNFTNITVMG. The chain crosses the membrane as a helical span at residues 25–45; it reads IVDILPIIPILFFLLAFVWQA.

It belongs to the PsbK family. In terms of assembly, PSII is composed of 1 copy each of membrane proteins PsbA, PsbB, PsbC, PsbD, PsbE, PsbF, PsbH, PsbI, PsbJ, PsbK, PsbL, PsbM, PsbT, PsbY, PsbZ, Psb30/Ycf12, at least 3 peripheral proteins of the oxygen-evolving complex and a large number of cofactors. It forms dimeric complexes.

The protein resides in the plastid. The protein localises to the chloroplast thylakoid membrane. Its function is as follows. One of the components of the core complex of photosystem II (PSII). PSII is a light-driven water:plastoquinone oxidoreductase that uses light energy to abstract electrons from H(2)O, generating O(2) and a proton gradient subsequently used for ATP formation. It consists of a core antenna complex that captures photons, and an electron transfer chain that converts photonic excitation into a charge separation. In Euglena myxocylindracea, this protein is Photosystem II reaction center protein K.